The primary structure comprises 551 residues: Probable glucomannan 4-beta-mannosyltransferase 3 (551 aa).

A helical transmembrane segment spans residues 60-80 (ACLALSAMLLADAVLMAAACF). Asp-154 is an active-site residue. 2 residues coordinate substrate: Asp-213 and Asp-215. The active site involves Asp-307. 4 helical membrane passes run 386-406 (VVAHVVPFMLYCVVIPFSVLI), 409-429 (VTVPVWGVVYVPTTITLLHAI), 504-524 (ILFSIFLFFCATYNLAYGGDY), and 525-545 (YFVYIYLQAIAFLVVGIGFCG).

The protein belongs to the glycosyltransferase 2 family. Plant cellulose synthase-like A subfamily.

It is found in the golgi apparatus membrane. It catalyses the reaction GDP-mannose + (glucomannan)n = GDP + (glucomannan)n+1.. Its function is as follows. Probable mannan synthase which consists of a 4-beta-mannosyltransferase activity on mannan using GDP-mannose. The beta-1,4-mannan product is the backbone for galactomannan synthesis by galactomannan galactosyltransferase. Galactomannan is a noncellulosic polysaccharides of plant cell wall. This chain is Probable glucomannan 4-beta-mannosyltransferase 3, found in Oryza sativa subsp. japonica (Rice).